Reading from the N-terminus, the 309-residue chain is Uricase (309 aa).

At Ala-2 the chain carries N-acetylalanine. Catalysis depends on charge relay system residues Lys-16 and Thr-63. Thr-63, Asp-64, Phe-165, Arg-182, Val-237, Gln-238, and Asn-264 together coordinate urate. The active-site Charge relay system is the His-266. A Microbody targeting signal motif is present at residues 307-309 (SKL).

This sequence belongs to the uricase family.

The protein resides in the peroxisome. It carries out the reaction urate + O2 + H2O = 5-hydroxyisourate + H2O2. It functions in the pathway purine metabolism; urate degradation; (S)-allantoin from urate: step 1/3. Its function is as follows. Catalyzes the oxidation of uric acid to 5-hydroxyisourate, which is further processed to form (S)-allantoin. The sequence is that of Uricase from Arabidopsis thaliana (Mouse-ear cress).